The chain runs to 109 residues: Cell division suppressor protein YneA (109 aa).

Positions 39 to 90 (SEVDVNEGDSIWALADQYAAKSDMAKADFVSWVEKENNLTDGHVKAGDYVVI) constitute a LysM domain.

Belongs to the YneA family.

It is found in the cytoplasm. Functionally, inhibits cell division during the SOS response. Affects a later stage of the cell division protein assembly, after the assembly of the Z ring, by probably suppressing recruitment of FtsL and/or DivIC to the division machinery. The sequence is that of Cell division suppressor protein YneA from Listeria innocua serovar 6a (strain ATCC BAA-680 / CLIP 11262).